A 66-amino-acid chain; its full sequence is Large ribosomal subunit protein bL35 (66 aa).

A compositionally biased stretch (basic residues) spans 1-26; that stretch reads MPKMKTHRGAAKRVKRTGSGKLKRSR. The tract at residues 1-49 is disordered; the sequence is MPKMKTHRGAAKRVKRTGSGKLKRSRAFTSHLFANKSTKQKRKLRKASL.

The protein belongs to the bacterial ribosomal protein bL35 family.

In Staphylococcus saprophyticus subsp. saprophyticus (strain ATCC 15305 / DSM 20229 / NCIMB 8711 / NCTC 7292 / S-41), this protein is Large ribosomal subunit protein bL35.